The primary structure comprises 616 residues: KIF-binding protein (616 aa).

Positions 52–78 are disordered; that stretch reads EEEEESEAEGKEERRDGPESGGRRGES. The span at 59 to 78 shows a compositional bias: basic and acidic residues; sequence AEGKEERRDGPESGGRRGES.

The protein belongs to the KIF-binding protein family.

The protein resides in the cytoplasm. It localises to the cytoskeleton. Activator of KIF1B plus-end-directed microtubule motor activity. Required for organization of axonal microtubules, and axonal outgrowth and maintenance during peripheral and central nervous system development. The protein is KIF-binding protein of Xenopus tropicalis (Western clawed frog).